The primary structure comprises 267 residues: MTIMRKNHPLLKIINHSFIDLPTPSNISSWWNFGSLLGICLMIQILTGLFLAMHYTSDTATAFSSVTHICRDVNYGWLIRYLHANGASMFFICLFIHVGRGIYYGSYMLSETWNIGIILFLTTMATAFVGYVLPWGQMSFWGATVITNLLSAIPYIGTSLVEWIWGGFSVDKATLTRFFAFHFILPFIITAFVLVHLLFLHETGSNNPSGLNSNSDKIPFHPYYTIKDLLGVILLLMVLMILVLFFPDVLGDPDNYTPANPLNTPAH.

The next 4 helical transmembrane spans lie at 33-53 (FGSLLGICLMIQILTGLFLAM), 77-98 (WLIRYLHANGASMFFICLFIHV), 113-133 (WNIGIILFLTTMATAFVGYVL), and 178-198 (FFAFHFILPFIITAFVLVHLL). Heme b is bound by residues His-83 and His-97. Residues His-182 and His-196 each coordinate heme b. His-201 provides a ligand contact to a ubiquinone. Residues 226 to 246 (IKDLLGVILLLMVLMILVLFF) form a helical membrane-spanning segment.

It belongs to the cytochrome b family. The cytochrome bc1 complex contains 11 subunits: 3 respiratory subunits (MT-CYB, CYC1 and UQCRFS1), 2 core proteins (UQCRC1 and UQCRC2) and 6 low-molecular weight proteins (UQCRH/QCR6, UQCRB/QCR7, UQCRQ/QCR8, UQCR10/QCR9, UQCR11/QCR10 and a cleavage product of UQCRFS1). This cytochrome bc1 complex then forms a dimer. Requires heme b as cofactor.

The protein localises to the mitochondrion inner membrane. In terms of biological role, component of the ubiquinol-cytochrome c reductase complex (complex III or cytochrome b-c1 complex) that is part of the mitochondrial respiratory chain. The b-c1 complex mediates electron transfer from ubiquinol to cytochrome c. Contributes to the generation of a proton gradient across the mitochondrial membrane that is then used for ATP synthesis. This chain is Cytochrome b (MT-CYB), found in Abrothrix olivaceus (Olive grass mouse).